The primary structure comprises 732 residues: Polyribonucleotide nucleotidyltransferase (732 aa).

Positions 515 and 521 each coordinate Mg(2+). Residues 581–641 form the KH domain; that stretch reads PKLELFNVDP…KNVDAAKDYI (61 aa). The region spanning 672 to 731 is the S1 motif domain; sequence GDEFTGSVKSVVDFGVFIELKDGVDGLLHISKIKSPLNVGDQVKVCVSEQKGNKISLSLV.

It belongs to the polyribonucleotide nucleotidyltransferase family. Mg(2+) is required as a cofactor.

It is found in the cytoplasm. The enzyme catalyses RNA(n+1) + phosphate = RNA(n) + a ribonucleoside 5'-diphosphate. In terms of biological role, involved in mRNA degradation. Catalyzes the phosphorolysis of single-stranded polyribonucleotides processively in the 3'- to 5'-direction. This is Polyribonucleotide nucleotidyltransferase from Campylobacter concisus (strain 13826).